Reading from the N-terminus, the 62-residue chain is MQWLADYWWIILILLVGVLLNAIKELRRLDVKKFLDNKPELPPHRDLNSKWDDEDDWPQKKP.

A helical membrane pass occupies residues 3-23; the sequence is WLADYWWIILILLVGVLLNAI. Positions 36–62 are disordered; that stretch reads DNKPELPPHRDLNSKWDDEDDWPQKKP.

It belongs to the UPF0370 family.

Its subcellular location is the cell membrane. The protein is UPF0370 protein plu2724 of Photorhabdus laumondii subsp. laumondii (strain DSM 15139 / CIP 105565 / TT01) (Photorhabdus luminescens subsp. laumondii).